Reading from the N-terminus, the 473-residue chain is Photosystem II CP43 reaction center protein (473 aa).

Residues 1-14 (MKILYSLRRFYHVE) constitute a propeptide that is removed on maturation. T15 carries the N-acetylthreonine modification. T15 carries the post-translational modification Phosphothreonine. 5 helical membrane passes run 69–93 (LFEV…PHLA), 134–155 (LLGP…KDRN), 178–200 (KALY…RKIT), 255–275 (KPFA…LSYS), and 291–312 (WFNN…ASQA). E367 contacts [CaMn4O5] cluster. A helical transmembrane segment spans residues 447-471 (RARAAAAGFEKGIDRDLEPVLYMNP).

The protein belongs to the PsbB/PsbC family. PsbC subfamily. PSII is composed of 1 copy each of membrane proteins PsbA, PsbB, PsbC, PsbD, PsbE, PsbF, PsbH, PsbI, PsbJ, PsbK, PsbL, PsbM, PsbT, PsbX, PsbY, PsbZ, Psb30/Ycf12, at least 3 peripheral proteins of the oxygen-evolving complex and a large number of cofactors. It forms dimeric complexes. Binds multiple chlorophylls and provides some of the ligands for the Ca-4Mn-5O cluster of the oxygen-evolving complex. It may also provide a ligand for a Cl- that is required for oxygen evolution. PSII binds additional chlorophylls, carotenoids and specific lipids. serves as cofactor. Phosphorylated on threonine residue(s); phosphorylation increases with increasing light levels.

Its subcellular location is the plastid. It localises to the chloroplast thylakoid membrane. One of the components of the core complex of photosystem II (PSII). It binds chlorophyll and helps catalyze the primary light-induced photochemical processes of PSII. PSII is a light-driven water:plastoquinone oxidoreductase, using light energy to abstract electrons from H(2)O, generating O(2) and a proton gradient subsequently used for ATP formation. The sequence is that of Photosystem II CP43 reaction center protein from Secale cereale (Rye).